The primary structure comprises 385 residues: Glucans biosynthesis protein C (385 aa).

10 consecutive transmembrane segments (helical) span residues 17-37 (AWLM…SHTW), 60-80 (MQVF…RYPL), 91-111 (VGIP…IMLQ), 137-157 (ISHL…VWIF), 173-193 (KFSM…YAVI), 212-232 (FIVM…LAFI), 245-262 (RGST…LLNQ), 274-294 (TESV…FSFG), 311-331 (ASLF…AYIT), and 338-358 (WLGF…LYEI).

It belongs to the acyltransferase 3 family. OpgC subfamily.

Its subcellular location is the cell membrane. It functions in the pathway glycan metabolism; osmoregulated periplasmic glucan (OPG) biosynthesis. Its function is as follows. Necessary for the succinyl substitution of periplasmic glucans. Could catalyze the transfer of succinyl residues from the cytoplasmic side of the membrane to the nascent glucan backbones on the periplasmic side of the membrane. The chain is Glucans biosynthesis protein C from Escherichia coli O81 (strain ED1a).